The chain runs to 598 residues: Elongation factor 4 (598 aa).

Positions 2-184 constitute a tr-type G domain; it reads NNIRNFAIIA…AIVTKLPAPQ (183 aa). GTP is bound by residues 14-19 and 131-134; these read DHGKST and NKVD.

It belongs to the TRAFAC class translation factor GTPase superfamily. Classic translation factor GTPase family. LepA subfamily.

It is found in the cell membrane. The enzyme catalyses GTP + H2O = GDP + phosphate + H(+). In terms of biological role, required for accurate and efficient protein synthesis under certain stress conditions. May act as a fidelity factor of the translation reaction, by catalyzing a one-codon backward translocation of tRNAs on improperly translocated ribosomes. Back-translocation proceeds from a post-translocation (POST) complex to a pre-translocation (PRE) complex, thus giving elongation factor G a second chance to translocate the tRNAs correctly. Binds to ribosomes in a GTP-dependent manner. This chain is Elongation factor 4, found in Wolbachia pipientis subsp. Culex pipiens (strain wPip).